A 411-amino-acid polypeptide reads, in one-letter code: Tyrosine--tRNA ligase (411 aa).

L-tyrosine is bound at residue tyrosine 33. Positions 38 to 47 match the 'HIGH' region motif; sequence PTAESLHLGN. 2 residues coordinate L-tyrosine: tyrosine 160 and glutamine 164. Residues 222–226 carry the 'KMSKS' region motif; it reads KIGKS. Residue lysine 225 coordinates ATP. In terms of domain architecture, S4 RNA-binding spans 347–411; the sequence is SVIETLIKNK…KKQVILFKTV (65 aa).

This sequence belongs to the class-I aminoacyl-tRNA synthetase family. TyrS type 1 subfamily. In terms of assembly, homodimer.

The protein resides in the cytoplasm. It carries out the reaction tRNA(Tyr) + L-tyrosine + ATP = L-tyrosyl-tRNA(Tyr) + AMP + diphosphate + H(+). Its function is as follows. Catalyzes the attachment of tyrosine to tRNA(Tyr) in a two-step reaction: tyrosine is first activated by ATP to form Tyr-AMP and then transferred to the acceptor end of tRNA(Tyr). This chain is Tyrosine--tRNA ligase, found in Mycoplasmopsis agalactiae (strain NCTC 10123 / CIP 59.7 / PG2) (Mycoplasma agalactiae).